Reading from the N-terminus, the 638-residue chain is MPVVTLPDGSRREFDHPVTLLQVAEAIGPGLAKAALAGRVDGRLVDLSHRIEADAEVALVTARDADGVEVIRHSTAHLLAQAVKALYPKAQVTIGPVIQDGFYYDFSYERPFTPEDLEAIEAKMHELAAQALPVERRTMPREEAIAYFRSLGEAYKAEIIEAIPRGEVISLYSQGDFTDLCRGPHVPDTGRLNAFKLMKIAGAYWRGDSRNEMLQRIYGTAWGDRKDLAAYLQRLEEAERRDHRKLGKALDLFHMQEEAPGMVFWHPKGWILWQEIEQYMRRVFRDNGYQEIRTPLVVARTLWERSGHWEKFSDEMFTTASEERDYAIKPMNCPCHVQVYNQGLKSYRDLPLRLAEFGSCHRNELSGALHGLMRVRGFTQDDAHIFCTEEQIQDEVSRFIDLLFKVYADFGFSEVQIKLSTRPEKRVGSDEVWDKAEHALETALNAKGLAWDLQPGEGAFYGPKIEFSLKDCLDRVWQCGTIQVDFSMPDRLGATYVAEDGARHVPVMLHRAILGSLERFVGILTEHYAGQYPLWLAPVQAVVLNITDRQADYAREVAQEFVSKGFRVIADLRNEKVGFKIREHSMQRVPYLLIVGDKEVEAGSVSLRTRDGKDHGSFGIGDLVAKFTEETMKRAVSH.

Positions 1–61 (MPVVTLPDGS…EADAEVALVT (61 aa)) constitute a TGS domain. Residues 242–533 (DHRKLGKALD…LTEHYAGQYP (292 aa)) are catalytic. The Zn(2+) site is built by cysteine 333, histidine 384, and histidine 510.

The protein belongs to the class-II aminoacyl-tRNA synthetase family. In terms of assembly, homodimer. Zn(2+) is required as a cofactor.

It localises to the cytoplasm. It carries out the reaction tRNA(Thr) + L-threonine + ATP = L-threonyl-tRNA(Thr) + AMP + diphosphate + H(+). Its function is as follows. Catalyzes the attachment of threonine to tRNA(Thr) in a two-step reaction: L-threonine is first activated by ATP to form Thr-AMP and then transferred to the acceptor end of tRNA(Thr). Also edits incorrectly charged L-seryl-tRNA(Thr). The protein is Threonine--tRNA ligase of Methylococcus capsulatus (strain ATCC 33009 / NCIMB 11132 / Bath).